The following is a 449-amino-acid chain: MNSHTKQKIGVFGLGKTGISVYEELQGKCDVIVYDDLKANRDIFEELYTNNSIAALSDSRWQNLDKIVLSPGIPLTHKIAGIAKNFNIPIISDIDLLFEKSKNLNFIAVTGTNGKSTTTALISHILNSNGLDYPVAGNIGVPALQAKASKDGYILELSSFQLDLVKTFTAKIAVLLNITPDHLDRHQDMTGYIAAKSKIFDRMDKDSYAAINIDNYYCREIFMLLQQEQRIKLIPFSVTKILKNGISVVGDKINDNDISYKLPFNKNLQGTHNCENIAASYAVAKIIGVESKKILESISSFQSLPHRMQYIGSINNIGFYNDSKATNAISAVQSIKALDNIYWLAGGIPKEGGIEEIKPYFSKIKKAYFYGQAKEIFAKTAKNIVDFVICDNLEQAFDLAYKDAVGDNAEVKNILLAPSCSSYDQFKNFEERGELFMKLSKRHCEEITK.

G111–T117 contributes to the ATP binding site.

Belongs to the MurCDEF family.

The protein resides in the cytoplasm. It catalyses the reaction UDP-N-acetyl-alpha-D-muramoyl-L-alanine + D-glutamate + ATP = UDP-N-acetyl-alpha-D-muramoyl-L-alanyl-D-glutamate + ADP + phosphate + H(+). It functions in the pathway cell wall biogenesis; peptidoglycan biosynthesis. Its function is as follows. Cell wall formation. Catalyzes the addition of glutamate to the nucleotide precursor UDP-N-acetylmuramoyl-L-alanine (UMA). This Rickettsia felis (strain ATCC VR-1525 / URRWXCal2) (Rickettsia azadi) protein is UDP-N-acetylmuramoylalanine--D-glutamate ligase.